The primary structure comprises 729 residues: Fatty acid oxidation complex subunit alpha (729 aa).

Residues 1–189 are enoyl-CoA hydratase/isomerase; that stretch reads MLYKGDTLYV…KIGLIDGIVK (189 aa). Aspartate 296 contacts substrate. Positions 311-729 are 3-hydroxyacyl-CoA dehydrogenase; the sequence is EMPKQAAVLG…ARPVGALKTA (419 aa). Residues methionine 324, aspartate 343, 400-402, lysine 407, and serine 429 each bind NAD(+); that span reads VVE. Histidine 450 (for 3-hydroxyacyl-CoA dehydrogenase activity) is an active-site residue. Position 453 (asparagine 453) interacts with NAD(+). Positions 500 and 660 each coordinate substrate. A disordered region spans residues 708–729; it reads RHNEPYYPPVEPARPVGALKTA.

It in the N-terminal section; belongs to the enoyl-CoA hydratase/isomerase family. The protein in the C-terminal section; belongs to the 3-hydroxyacyl-CoA dehydrogenase family. As to quaternary structure, heterotetramer of two alpha chains (FadB) and two beta chains (FadA).

The catalysed reaction is a (3S)-3-hydroxyacyl-CoA + NAD(+) = a 3-oxoacyl-CoA + NADH + H(+). It carries out the reaction a (3S)-3-hydroxyacyl-CoA = a (2E)-enoyl-CoA + H2O. The enzyme catalyses a 4-saturated-(3S)-3-hydroxyacyl-CoA = a (3E)-enoyl-CoA + H2O. It catalyses the reaction (3S)-3-hydroxybutanoyl-CoA = (3R)-3-hydroxybutanoyl-CoA. The catalysed reaction is a (3Z)-enoyl-CoA = a 4-saturated (2E)-enoyl-CoA. It carries out the reaction a (3E)-enoyl-CoA = a 4-saturated (2E)-enoyl-CoA. It participates in lipid metabolism; fatty acid beta-oxidation. In terms of biological role, involved in the aerobic and anaerobic degradation of long-chain fatty acids via beta-oxidation cycle. Catalyzes the formation of 3-oxoacyl-CoA from enoyl-CoA via L-3-hydroxyacyl-CoA. It can also use D-3-hydroxyacyl-CoA and cis-3-enoyl-CoA as substrate. The polypeptide is Fatty acid oxidation complex subunit alpha (Enterobacter sp. (strain 638)).